The primary structure comprises 276 residues: Sulfur carrier protein FdhD (276 aa).

The active-site Cysteine persulfide intermediate is the Cys120.

This sequence belongs to the FdhD family.

The protein localises to the cytoplasm. Functionally, required for formate dehydrogenase (FDH) activity. Acts as a sulfur carrier protein that transfers sulfur from IscS to the molybdenum cofactor prior to its insertion into FDH. The chain is Sulfur carrier protein FdhD from Bordetella parapertussis (strain 12822 / ATCC BAA-587 / NCTC 13253).